The chain runs to 519 residues: Circadian clock oscillator protein KaiC (519 aa).

One can recognise a KaiC 1 domain in the interval 1-247 (MTSAEMTSPN…TITDHGINIF (247 aa)). 6 residues coordinate ATP: G49, T50, G51, K52, T53, and L54. T53 lines the Mg(2+) pocket. The active-site Proton acceptor in CI (KaiC 1) is the E77. S89 serves as a coordination point for ATP. A B-loop, required to bind KaiB and SasA region spans residues 115-122 (QEVVGGFD). Positions 224, 225, 226, 228, 230, 240, and 241 each coordinate ATP. The interval 248-260 (PLGAMRLTQRSSN) is linker. Residues 261–519 (VRVSSGVVRL…RGVQEKGPES (259 aa)) form the KaiC 2 domain. Positions 290, 291, 292, 293, 294, 295, and 296 each coordinate ATP. T295 serves as a coordination point for Mg(2+). Residue E318 coordinates Mg(2+). E318 acts as the Proton acceptor in CII (KaiC 2) in catalysis. W331 serves as a coordination point for ATP. At S431 the chain carries Phosphoserine; by autocatalysis. T432 is modified (phosphothreonine; by autocatalysis). ATP contacts are provided by R451, K457, M458, R459, S461, H463, and K465. Residues 488-497 (RIISGSPTRI) are A-loop, interacts with KaiA.

It belongs to the KaiC family. Homohexamer resembling 2 stacked donuts with a central pore nearly blocked on one side; hexamerization is dependent on ATP-binding. Binds 12 ATP; 6 between each subunit in both layers. KaiB only binds to phospho-Ser-431 KaiC (not doubly phosphorylated KaiC). Complex formation between KaiB and KaiC is regulated by the phosphorylation state of KaiC and by an ATP hydrolysis-driven conformation change in the CI ring of KaiC; complex formation is slow. Slow complex formation is crucial for the timing of the circadian period. KaiB switches to a thioredoxin-like form called KaiB(fs) when bound to KaiC. The KaiABC complex composition changes during the circadian cycle to control KaiC phosphorylation. Complexes KaiC(6), KaiA(2-4):KaiC(6), KaiB(6):KaiC(6) and KaiC(6):KaiB(6):KaiA(12) are among the most important forms, many form cooperatively. Interacts directly with KaiB and SasA. The CI domain binds to KaiB and SasA; as they have a similar fold they compete for the same site on CI. CikA interacts with this protein in the clock complex. Binds to the C-terminus of KaiA via a coiled-coil structure. Forms KaiC(6):KaiB(1) and KaiC(6):KaiB(6) complexes. Mg(2+) serves as cofactor. In terms of processing, has a 4 step phosphorylation cycle; the autokinase acts first on Thr-432, then Ser-431. When Ser-431 is modified KaiC switches to an autophosphatase mode, acting first on phospho-Thr-432 then phospho-Ser-431. Phosphorylated and dephosphorylated on serine/threonine residues by autocatalysis. Unphosphorylated, mono- and di-phosphorylated forms exist. The phosphorylated form correlates with clock speed. The presence of KaiA increases phosphorylation and stabilizes these forms. Post-translationally, phosphorylated on serine and threonine residues by autocatalysis. Has a 4 step phosphorylation cycle; the autokinase acts first on Thr-432, then Ser-431. When Ser-431 is modified KaiC switches to an autophosphatase mode, acting first on phospho-Thr-432 then phospho-Ser-431.

It catalyses the reaction L-seryl-[protein] + ATP = O-phospho-L-seryl-[protein] + ADP + H(+). It carries out the reaction L-threonyl-[protein] + ATP = O-phospho-L-threonyl-[protein] + ADP + H(+). The enzyme catalyses ATP + H2O = ADP + phosphate + H(+). Interaction with KaiA stimulates autophosphorylation, KaiC interaction with KaiB sequesters KaiA, preventing it stimulating the KaiC kinase, leading to autodephosphorylation. A KaiA dimer is sufficient to enhance KaiC phosphorylation. Interaction of KaiA with the A-loop stimulates autokinase activity. Its function is as follows. The KaiABC oscillator complex constitutes the main circadian regulator in cyanobacteria. Complex composition changes during the circadian cycle to control KaiC phosphorylation; KaiA stimulates KaiC autophosphorylation, while KaiB sequesters KaiA, leading to KaiC autodephosphorylation. The Kai complex controls chromosome condensation, leading to a transcription accessible chromosome during the first half of the circadian cycle and a compact, less transcription-accessible chromosome during the latter half. Clock output pathways impact the RpaA transcriptional regulator. Circadian oscillations can be generated in vitro by incubating KaiA, KaiB and KaiC with 1 mM ATP. The cycle is self-sustainable for at least 3 cycles and resistant to temperature changes. Mutations in KaiC alone prolong or reduce the circadian rhythm. A very robust clock is reconstituted with KaiA, KaiB, KaiC, SasA, CikA and RpaA; output is measured by transcription from an appropriate reporter. In terms of biological role, the level of KaiC phosphorylation and KaiC ATPase activity represent the key features of the biochemical oscillator. KaiA homodimer binding to the KaiC CII domain stimulates KaiC's ATPase activity and forms KaiA(2-4):KaiC(6) complexes, which stimulate KaiC autophosphorylation first on Thr-432 then Ser-431. Phospho-Ser-431-KaiC accumulation triggers binding of KaiB to CI to form the KaiB(6):KaiC(6) complex, leading to changes in the output regulators CikA and SasA. KaiB(6):KaiC(6) formation exposes a site for KaiA binding that sequesters KaiA from the CII domain, making the KaiC(6):KaiB(6):KaiA(12) complex that results in KaiC autodephosphorylation. Complete dephosphorylation of KaiC leads to dissociation of KaiA(2):KaiB(1), completing 1 cycle of the Kai oscillator. Has a weak, temperature-independent ATPase activity (about 15 molecules of ATP per day); the addition of KaiA and KaiB increases activity slightly and makes the activity oscillate with a circadian period in vitro for over 60 hours. ATPase activity defines the circadian period. The phosphorylation state of KaiC modulates its ATPase activity and effects KaiB binding. Functionally, there are several clock output pathways; SasA/RpaA, CikA/RpaA and LabA. KaiC enhances the autophosphorylation activity of SasA, which then transfers its phosphate group to RpaA to activate it. Phosphotransfer is maximal when KaiC phosphorylation is active during the circadian cycle. KaiB and KaiC together enhance the phosphatase activity of CikA on phospho-RpaA. Its function is as follows. KaiC is important for metabolic partitioning during the dark to light shift, modulating the balance between the Calvin cycle and oxidative pentose phosphate pathway under natural growth conditions. This is Circadian clock oscillator protein KaiC from Synechococcus elongatus (strain ATCC 33912 / PCC 7942 / FACHB-805) (Anacystis nidulans R2).